The chain runs to 273 residues: ATP synthase subunit a (273 aa).

Helical transmembrane passes span 34–54 (IINMDTIFWSIFAGVVGCLFM), 94–114 (FIAPLALTVFVWVALMNSLDF), 115–135 (LPVDMFSAFFHAVGLDSLITH), 143–163 (DLNGTMGIALGVFALMIFYNI), 171–191 (FVHELFAAPFGIWLAPFNLLL), 218–238 (FLLIALLGSTATAFGFFGHVV), and 244–264 (AIFHILIVFLQAFIFMMLTLV).

This sequence belongs to the ATPase A chain family. As to quaternary structure, F-type ATPases have 2 components, CF(1) - the catalytic core - and CF(0) - the membrane proton channel. CF(1) has five subunits: alpha(3), beta(3), gamma(1), delta(1), epsilon(1). CF(0) has three main subunits: a(1), b(2) and c(9-12). The alpha and beta chains form an alternating ring which encloses part of the gamma chain. CF(1) is attached to CF(0) by a central stalk formed by the gamma and epsilon chains, while a peripheral stalk is formed by the delta and b chains.

It localises to the cell inner membrane. Key component of the proton channel; it plays a direct role in the translocation of protons across the membrane. The chain is ATP synthase subunit a from Janthinobacterium sp. (strain Marseille) (Minibacterium massiliensis).